Reading from the N-terminus, the 34-residue chain is Trypsin inhibitor (34 aa).

Cystine bridges form between C7/C29 and C11/C25.

The protein resides in the secreted. In terms of biological role, inhibits trypsin. The protein is Trypsin inhibitor of Veronica hederifolia (Ivy-leaved speedwell).